The following is an 898-amino-acid chain: Chloride channel protein 2 (898 aa).

Residue A2 is modified to N-acetylalanine. Residues 2–87 (AAAAAEEGME…RCHKFLVSRV (86 aa)) lie on the Cytoplasmic side of the membrane. The segment at 16–34 (QYEQTLMYGRYTQDLGAFA) is essential for channel gating by both voltage and cell volume. T20 carries the phosphothreonine modification. The segment at 36-49 (EEAARIRLGGPEPW) is modulates channel gating by both voltage and cell volume. The next 2 helical transmembrane spans lie at 88–121 (GEDW…AQQW) and 130–155 (ILLQ…TQIL). The Selectivity filter part_1 motif lies at 161-165 (GSGIP). Residue S162 participates in chloride binding. An intramembrane region (helical) is located at residues 164–171 (IPEMKTIL). Transmembrane regions (helical) follow at residues 180–198 (LTLK…ALGS) and 205–223 (EGPF…SKFL). Residues 203 to 207 (GKEGP) carry the Selectivity filter part_2 motif. Intramembrane regions (helical) lie at residues 239–251 (MLAA…VGCC) and 255–263 (PIGGVLFSI). 5 helical membrane-spanning segments follow: residues 275–295 (YWRG…LAVW), 321–349 (LPAF…VQVM), 358–377 (FLMR…ISTL), 429–449 (ANVF…SALA), and 457–480 (GAFM…MAAW). Residues 457–461 (GAFMP) carry the Selectivity filter part_3 motif. F459 provides a ligand contact to chloride. An intramembrane region (helical) is located at residues 497–511 (GGYAVVGAAALAGAV). Residues 512–513 (TH) constitute an intramembrane region (note=Loop between two helices). The helical intramembrane region spans 514–525 (TVSTAVIVFELT). The segment at residues 526–530 (GQIAH) is an intramembrane region (note=Loop between two helices). Residues 531-548 (ILPVMIAVILANAVAQSL) traverse the membrane as a helical segment. Topologically, residues 549–898 (QPSLYDSIIR…SPSDSDDKCQ (350 aa)) are cytoplasmic. Residue Y553 coordinates chloride. A CBS 1 domain is found at 584 to 642 (MVRDVPHVALSCTFRDLRLALHRTKGRMLALVESPESMILLGSIERSQVVALLGAQLSP). Disordered regions lie at residues 643–672 (ARRR…PEAS) and 686–717 (AARG…TGSA). The span at 705–717 (VTRNLGESPTGSA) shows a compositional bias: polar residues. Phosphoserine occurs at positions 712 and 758. Residues 790–850 (IDPAPFQLVE…GSVTAQGVKV (61 aa)) enclose the CBS 2 domain. The Basolateral membrane sorting motif lies at 812-813 (LL). The tract at residues 856-898 (SFRDSATSSSDTETTEVHALWGPHSRHGLPREGSPSDSDDKCQ) is disordered.

This sequence belongs to the chloride channel (TC 2.A.49) family. ClC-2/CLCN2 subfamily. As to quaternary structure, homodimer. Interacts with auxiliary subunit HEPACAM. Phosphorylated. Activated by dephosphorylation. In terms of tissue distribution, ubiquitously expressed. Moderately expressed in aortic and coronary vascular smooth muscle cells and expressed at a low level in aortic endothelial cells. Expressed in the adrenal gland, predominantly in the zona glomerulosa. Expressed in white mater perivascular astrocytes and ependymal cells (at protein level).

It is found in the cell membrane. The protein localises to the basolateral cell membrane. The protein resides in the cell projection. It localises to the dendritic spine membrane. Its subcellular location is the axon. The enzyme catalyses chloride(in) = chloride(out). The catalysed reaction is thiocyanate(in) = thiocyanate(out). It carries out the reaction bromide(in) = bromide(out). It catalyses the reaction nitrate(in) = nitrate(out). The enzyme catalyses iodide(out) = iodide(in). Common gate kinetics are down-regulated by intracellular ATP. Inhibited by AK-42, a derivative of meclofenamate. Inhibited by Cd(2+). Inhibited by Zn(2+) and PKC activation. Inhibited at acidic pH. CCLN2:HEPACAM channel conductance is up-regulated upon hypo-osmolarity. Voltage-gated and osmosensitive chloride channel. Forms a homodimeric channel where each subunit has its own ion conduction pathway. Conducts double-barreled currents controlled by two types of gates, two fast glutamate gates that control each subunit independently and a slow common gate that opens and shuts off both subunits simultaneously. Displays inward rectification currents activated upon membrane hyperpolarization and extracellular hypotonicity. Contributes to chloride conductance involved in neuron excitability. In hippocampal neurons, generates a significant part of resting membrane conductance and provides an additional chloride efflux pathway to prevent chloride accumulation in dendrites upon GABA receptor activation. In glia, associates with the auxiliary subunit HEPACAM/GlialCAM at astrocytic processes and myelinated fiber tracts where it may regulate transcellular chloride flux buffering extracellular chloride and potassium concentrations. Regulates aldosterone production in adrenal glands. The opening of CLCN2 channels at hyperpolarized membrane potentials in the glomerulosa causes cell membrane depolarization, activation of voltage-gated calcium channels and increased expression of aldosterone synthase, the rate-limiting enzyme for aldosterone biosynthesis. Contributes to chloride conductance in retinal pigment epithelium involved in phagocytosis of shed photoreceptor outer segments and photoreceptor renewal. Conducts chloride currents at the basolateral membrane of epithelial cells with a role in chloride reabsorption rather than secretion. Permeable to small monovalent anions with chloride &gt; thiocyanate &gt; bromide &gt; nitrate &gt; iodide ion selectivity. This Homo sapiens (Human) protein is Chloride channel protein 2.